Consider the following 178-residue polypeptide: Caveolin-1 (178 aa).

At S2 the chain carries N-acetylserine. S2 bears the Phosphoserine mark. The required for homooligomerization stretch occupies residues 2-94 (SGGKYVDSEG…WKASFTTFTV (93 aa)). The Cytoplasmic portion of the chain corresponds to 2-104 (SGGKYVDSEG…TKYWFYRLLS (103 aa)). The residue at position 5 (K5) is an N6-acetyllysine; alternate. K5 is covalently cross-linked (Glycyl lysine isopeptide (Lys-Gly) (interchain with G-Cter in ubiquitin); alternate). Residue Y6 is modified to Phosphotyrosine. S9 carries the phosphoserine modification. The residue at position 14 (Y14) is a Phosphotyrosine; by ABL1. Y25 bears the Phosphotyrosine mark. Glycyl lysine isopeptide (Lys-Gly) (interchain with G-Cter in ubiquitin) cross-links involve residues K26, K30, K39, K47, and K57. Residues 82–94 (DGIWKASFTTFTV) form an interaction with CAVIN3 region. The helical intramembrane region spans 105-125 (AVFGIPMALIWGIYFAIVSFL). Residues 126 to 178 (HIWVVVPYIKSFLIEIQCISRVYSIYIHTFCDPLFEAFGKVFSNIRINTQKEI) lie on the Cytoplasmic side of the membrane. An interacts with SPRY1, SPRY2, SPRY3 and SPRY4 region spans residues 131–142 (VPYIKSFLIEIQ). S-palmitoyl cysteine attachment occurs at residues C143 and C156. The interacts with SPRY1, SPRY2, and SPRY4 stretch occupies residues 149-160 (SIYIHTFCDPLF). Positions 167–178 (FSNIRINTQKEI) are interacts with SPRY1, SPRY2, SPRY3 and SPRY4.

The protein belongs to the caveolin family. In terms of assembly, homooligomer. Interacts (via the N-terminus) with DPP4; the interaction is direct. Forms a stable heterooligomeric complex with CAV2 that targets to lipid rafts and drives caveolae formation. Interacts with PACSIN2; this interaction induces membrane tubulation. Interacts with BMX, BTK, CTNNB1, CDH1, GLIPR2, JUP, NOSTRIN, SNAP25 and STX1A. Interacts with SLC7A9. Interacts with TGFBR1. Interacts with CAVIN3 (via leucine-zipper domain) in a cholesterol-sensitive manner. Interacts with CAVIN1. Interacts with EHD2 in a cholesterol-dependent manner. Forms a ternary complex with UBXN6 and VCP; mediates CAV1 targeting to lysosomes for degradation. Interacts with ABCG1; this interaction regulates ABCG1-mediated cholesterol efflux. Interacts with NEU3; this interaction enhances NEU3 sialidase activity within caveola. Interacts (via C-terminus) with SPRY1, SPRY2 (via C-terminus), SPRY3, and SPRY4. Post-translationally, phosphorylated at Tyr-14 by ABL1 in response to oxidative stress. Ubiquitinated. Undergo monoubiquitination and multi- and/or polyubiquitination. Monoubiquitination of N-terminal lysines promotes integration in a ternary complex with UBXN6 and VCP which promotes oligomeric CAV1 targeting to lysosomes for degradation. Ubiquitinated by ZNRF1; leading to degradation and modulation of the TLR4-mediated immune response.

The protein localises to the golgi apparatus membrane. Its subcellular location is the cell membrane. The protein resides in the membrane. It is found in the caveola. It localises to the membrane raft. May act as a scaffolding protein within caveolar membranes. Forms a stable heterooligomeric complex with CAV2 that targets to lipid rafts and drives caveolae formation. Mediates the recruitment of CAVIN proteins (CAVIN1/2/3/4) to the caveolae. Interacts directly with G-protein alpha subunits and can functionally regulate their activity. Involved in the costimulatory signal essential for T-cell receptor (TCR)-mediated T-cell activation. Its binding to DPP4 induces T-cell proliferation and NF-kappa-B activation in a T-cell receptor/CD3-dependent manner. Recruits CTNNB1 to caveolar membranes and may regulate CTNNB1-mediated signaling through the Wnt pathway. Negatively regulates TGFB1-mediated activation of SMAD2/3 by mediating the internalization of TGFBR1 from membrane rafts leading to its subsequent degradation. Binds 20(S)-hydroxycholesterol (20(S)-OHC). This chain is Caveolin-1 (CAV1), found in Rhinolophus ferrumequinum (Greater horseshoe bat).